A 113-amino-acid chain; its full sequence is Cytochrome c (113 aa).

4 residues coordinate heme c: C21, C24, H25, and M90.

The protein belongs to the cytochrome c family. Binds 1 heme c group covalently per subunit.

It localises to the mitochondrion intermembrane space. Its function is as follows. Electron carrier protein. The oxidized form of the cytochrome c heme group can accept an electron from the heme group of the cytochrome c1 subunit of cytochrome reductase. Cytochrome c then transfers this electron to the cytochrome oxidase complex, the final protein carrier in the mitochondrial electron-transport chain. The sequence is that of Cytochrome c (cytC) from Dictyostelium discoideum (Social amoeba).